The sequence spans 119 residues: Large ribosomal subunit protein uL18 (119 aa).

This sequence belongs to the universal ribosomal protein uL18 family. Part of the 50S ribosomal subunit; part of the 5S rRNA/L5/L18/L25 subcomplex. Contacts the 5S and 23S rRNAs.

In terms of biological role, this is one of the proteins that bind and probably mediate the attachment of the 5S RNA into the large ribosomal subunit, where it forms part of the central protuberance. The protein is Large ribosomal subunit protein uL18 of Jannaschia sp. (strain CCS1).